The primary structure comprises 157 residues: V-type proton ATPase 16 kDa proteolipid subunit c (157 aa).

The Lumenal portion of the chain corresponds to 1–10 (MALPEENPVY). Residues 11-33 (GPFFGVMGAAAAIIFSALGAAYG) traverse the membrane as a helical segment. Residues 34 to 55 (TAKSGTGIAAMSVMRPELIMKS) are Cytoplasmic-facing. The helical transmembrane segment at 56–76 (IIPVVMAGIIAIYGLVVAVLI) threads the bilayer. Over 77–94 (AGSLDTPTKYSLYKGFIH) the chain is Lumenal. The helical transmembrane segment at 95 to 116 (LGAGLAVGFSGLAAGFAIGIVG) threads the bilayer. Topologically, residues 117 to 128 (DAGVRGTAQQPR) are cytoplasmic. A helical transmembrane segment spans residues 129–154 (LFVGMILILIFAEVLGLYGLIVAIYL). At 155–157 (YTK) the chain is on the lumenal side.

It belongs to the V-ATPase proteolipid subunit family. In terms of assembly, V-ATPase is a heteromultimeric enzyme made up of two complexes: the ATP-hydrolytic V1 complex and the proton translocation V0 complex. The V1 complex consists of three catalytic AB heterodimers that form a heterohexamer, three peripheral stalks each consisting of EG heterodimers, one central rotor including subunits D and F, and the regulatory subunits C and H. The proton translocation complex V0 consists of the proton transport subunit a, a ring of proteolipid subunits c9c'', rotary subunit d, subunits e and f, and the accessory subunits VhaAC45 and ATP6AP2.

It is found in the membrane. Functionally, proton-conducting pore forming subunit of the V0 complex of vacuolar(H+)-ATPase (V-ATPase), a multisubunit enzyme composed of a peripheral complex (V1) that hydrolyzes ATP and a membrane integral complex (V0) that translocates protons. V-ATPase is responsible for acidifying and maintaining the pH of intracellular compartments and in some cell types, is targeted to the plasma membrane, where it is responsible for acidifying the extracellular environment. This chain is V-type proton ATPase 16 kDa proteolipid subunit c, found in Aedes aegypti (Yellowfever mosquito).